Reading from the N-terminus, the 327-residue chain is Complex I intermediate-associated protein 30, mitochondrial (327 aa).

A mitochondrion-targeting transit peptide spans 1–24; sequence MALVHKLLRDTYILRKFSKPTSAL. The tract at residues 42–63 is disordered; the sequence is PVASPGKASSQRKTEGDLQGDH. The span at 53–63 shows a compositional bias: basic and acidic residues; sequence RKTEGDLQGDH. Ser-318 is subject to Phosphoserine.

It belongs to the CIA30 family. Part of the mitochondrial complex I assembly/MCIA complex that comprises at least the core subunits TMEM126B, NDUFAF1, ECSIT and ACAD9 and complement subunits such as COA1 and TMEM186. Interacts with ECSIT. Interacts with ACAD9. At early stages of complex I assembly, it is found in intermediate subcomplexes that contain different subunits including NDUFB6, NDUFA6, NDUFA9, NDUFS3, NDUFS7, ND1, ND2 and ND3. Interacts with TMEM70 and TMEM242.

The protein resides in the mitochondrion. It is found in the mitochondrion matrix. In terms of biological role, as part of the MCIA complex, involved in the assembly of the mitochondrial complex I. This is Complex I intermediate-associated protein 30, mitochondrial from Gorilla gorilla gorilla (Western lowland gorilla).